The primary structure comprises 513 residues: Cytochrome P450 4p1 (513 aa).

Heme is bound by residues Glu-320 and Cys-459.

It belongs to the cytochrome P450 family. Heme serves as cofactor.

It localises to the endoplasmic reticulum membrane. It is found in the microsome membrane. Functionally, may be involved in the metabolism of insect hormones and in the breakdown of synthetic insecticides. This chain is Cytochrome P450 4p1 (Cyp4p1), found in Drosophila melanogaster (Fruit fly).